Consider the following 434-residue polypeptide: Protein POLLENLESS 3 (434 aa).

The disordered stretch occupies residues 13 to 47; it reads VYYTPPPARTSDHVAAMPMTERRRPPYSCSSSSER. A Nuclear localization signal 1 motif is present at residues 34–37; the sequence is RRRP. TPR repeat units lie at residues 95–131, 133–164, 191–224, and 241–274; these read DSALKDMAVVMKQLGRSDEGIEAIKSFRYLCSFESQD, IDNLLLELYKKSGRIEEEAVLLEHKLQTLEQG, ARILGNLGWVHLQLHNYGIAEQHYRRALGLERDK, and PEAKSLLDDVRDSPAESECGDEPFAKSYDRAVEM. Positions 142-166 form a coiled coil; it reads KKSGRIEEEAVLLEHKLQTLEQGMG. The segment at 309–329 is disordered; the sequence is TANKNYSDVSSSPASVRPNSA. Residues 310 to 326 show a composition bias toward polar residues; that stretch reads ANKNYSDVSSSPASVRP. The Nuclear localization signal 2 motif lies at 377-380; sequence KRKK. Residues 393–408 show a composition bias toward basic and acidic residues; it reads VKDTADGPKSESKKSW. The tract at residues 393–434 is disordered; sequence VKDTADGPKSESKKSWADIAEEEEAEEEEEERLQGELKTAEM. The stretch at 408–434 forms a coiled coil; sequence WADIAEEEEAEEEEEERLQGELKTAEM. Residues 411 to 423 are compositionally biased toward acidic residues; that stretch reads IAEEEEAEEEEEE. A compositionally biased stretch (basic and acidic residues) spans 424-434; sequence RLQGELKTAEM.

It belongs to the MS5 protein family. In terms of tissue distribution, expressed at low levels mostly in floral organs during meiosis. Also barely detectable in leaves, stems and roots.

It is found in the nucleus. Its function is as follows. Essential for male fertility, especially for microspore and pollen grain production. Involved in the regulation of cell division after male meiosis I and II to facilitate exit from meiosis and transition to G1. The chain is Protein POLLENLESS 3 from Arabidopsis thaliana (Mouse-ear cress).